A 113-amino-acid chain; its full sequence is Dynein light chain Tctex-type 1 (113 aa).

Methionine 1 is subject to N-acetylmethionine. Residues 41–113 form an interaction with GNB1 region; that stretch reads QWTTNVVEQT…CIVSAFGLSI (73 aa).

Belongs to the dynein light chain Tctex-type family. As to quaternary structure, homodimer. The cytoplasmic dynein 1 complex consists of two catalytic heavy chains (HCs) and a number of non-catalytic subunits presented by intermediate chains (ICs), light intermediate chains (LICs) and light chains (LCs); the composition seems to vary in respect to the IC, LIC and LC composition. The heavy chain homodimer serves as a scaffold for the probable homodimeric assembly of the respective non-catalytic subunits. The ICs and LICs bind directly to the HC dimer and dynein LCs assemble on the IC dimer. DYNLT1 and DYNLT3 compete for association with dynein IC (DYNC1I1 or DYNC1I2). Self-associates. Interacts with RHO. Interacts with DYNC1I1 and DYNC1I2. Interacts with DOC2A, DOC2B and SCN10A. Interacts with PVR. Interacts with SVIL isoform 2. Interacts with GNB1; the interaction occurs in presence of guanine nucleotide-binding protein G(T) subunit gamma; the interaction diminishes the association of DYNLT1 with dynein IC (DYNC1I1 or DYNC1I2). Interacts with GNB2, GNB3 and GNB5; the interactions occur in presence of guanine nucleotide-binding protein G(T) subunit gamma. Interacts with ACVR2B and ARHGEF2. Interacts with DNAI4. Interacts with CFAP61. Post-translationally, phosphorylated by BMPR2. The phosphorylation status is proposed to regulate the association with the cytoplasmic dynein complex and may have role in cytoplasmic dynein cargo release.

The protein resides in the golgi apparatus. It localises to the cytoplasm. Its subcellular location is the cytoskeleton. The protein localises to the spindle. In terms of biological role, acts as one of several non-catalytic accessory components of the cytoplasmic dynein 1 complex that are thought to be involved in linking dynein to cargos and to adapter proteins that regulate dynein function. Cytoplasmic dynein 1 acts as a motor for the intracellular retrograde motility of vesicles and organelles along microtubules. Binds to transport cargos and is involved in apical cargo transport such as rhodopsin-bearing vesicles in polarized epithelia. Is involved in intracellular targeting of D-type retrovirus gag polyproteins to the cytoplasmic assembly site. May also be a accessory component of axonemal dynein. Functionally, plays a role in neuronal morphogenesis; the function is independent of cytoplasmic dynein and seems to be coupled to regulation of the actin cytoskeleton by enhancing Rac1 activity. Required for neurite outgrowth. The function in neurogenesis may be regulated by association with a G-protein beta-gamma dimer. May function as a receptor-independent activator of heterotrimeric G-protein signaling; the activation appears to be independent of a nucleotide exchange. Plays a role in regulating neurogenesis; inhibits the genesis of neurons from precursor cells during cortical development presumably by antagonizing ARHGEF2. Unrelated to the role in retrograde microtubule-associated movement may play a role in the dimerization of cytoplasmic proteins/domains such as for ACVR2B. Binds to the cytoplasmic domain of ACVR2B and, in vitro, inhibits ACVR2B signaling. Involved in the regulation of mitotic spindle orientation. This is Dynein light chain Tctex-type 1 (Dynlt1) from Rattus norvegicus (Rat).